The following is a 253-amino-acid chain: 5'/3'-nucleotidase SurE (253 aa).

A divalent metal cation is bound by residues D8, D9, S39, and N92.

Belongs to the SurE nucleotidase family. The cofactor is a divalent metal cation.

The protein localises to the cytoplasm. It carries out the reaction a ribonucleoside 5'-phosphate + H2O = a ribonucleoside + phosphate. The catalysed reaction is a ribonucleoside 3'-phosphate + H2O = a ribonucleoside + phosphate. The enzyme catalyses [phosphate](n) + H2O = [phosphate](n-1) + phosphate + H(+). Functionally, nucleotidase with a broad substrate specificity as it can dephosphorylate various ribo- and deoxyribonucleoside 5'-monophosphates and ribonucleoside 3'-monophosphates with highest affinity to 3'-AMP. Also hydrolyzes polyphosphate (exopolyphosphatase activity) with the preference for short-chain-length substrates (P20-25). Might be involved in the regulation of dNTP and NTP pools, and in the turnover of 3'-mononucleotides produced by numerous intracellular RNases (T1, T2, and F) during the degradation of various RNAs. This chain is 5'/3'-nucleotidase SurE, found in Erwinia tasmaniensis (strain DSM 17950 / CFBP 7177 / CIP 109463 / NCPPB 4357 / Et1/99).